The following is a 495-amino-acid chain: Ribitol 5-phosphate transferase FKRP (495 aa).

Residues 1–6 (MRLTRC) are Cytoplasmic-facing. The helical transmembrane segment at 7 to 29 (QAALAAAITLNLLVLFYVSWLQH) threads the bilayer. The Lumenal portion of the chain corresponds to 30-495 (QPRNSRARGP…PALLSLTGSG (466 aa)). Cysteine 168 and cysteine 191 form a disulfide bridge. 2 N-linked (GlcNAc...) asparagine glycosylation sites follow: asparagine 172 and asparagine 209. Residues cysteine 289, cysteine 296, cysteine 317, and cysteine 318 each contribute to the Zn(2+) site. Positions 289–318 (CNKETTRCFGTVVGDTPAYLYEERWTPPCC) are zinc finger loop. Residues glycine 345, arginine 352, 359 to 364 (WDYDVD), 437 to 438 (QD), and 480 to 482 (NPQ) contribute to the CDP-L-ribitol site. Residues aspartate 360, aspartate 362, and aspartate 364 each contribute to the Mg(2+) site.

Belongs to the LicD transferase family. Homodimer; disulfide-linked. Tetramer. Forms a complex composed of FKRP, FKTN/fukutin, and RXYLT1/TMEM5. Also exists as large multimeric protein complexes. May interact with the dystrophin-glycoprotein complex (DGC). Mg(2+) is required as a cofactor. N-glycosylated. Expressed in the retina (at protein level). Expressed predominantly in skeletal muscle, placenta, and heart and relatively weakly in brain, lung, liver, kidney, and pancreas.

The protein resides in the golgi apparatus membrane. The protein localises to the secreted. It localises to the cell membrane. It is found in the sarcolemma. Its subcellular location is the rough endoplasmic reticulum. The protein resides in the cytoplasm. It catalyses the reaction 3-O-[Rib-ol-P-3-beta-D-GalNAc-(1-&gt;3)-beta-D-GlcNAc-(1-&gt;4)-(O-6-P-alpha-D-Man)]-Thr-[protein] + CDP-L-ribitol = 3-O-[Rib-ol-P-Rib-ol-P-3-beta-D-GalNAc-(1-&gt;3)-beta-D-GlcNAc-(1-&gt;4)-(O-6-P-alpha-D-Man)]-Thr-[protein] + CMP + H(+). The protein operates within protein modification; protein glycosylation. Functionally, catalyzes the transfer of a ribitol 5-phosphate from CDP-L-ribitol to the ribitol 5-phosphate previously attached by FKTN/fukutin to the phosphorylated O-mannosyl trisaccharide (N-acetylgalactosamine-beta-3-N-acetylglucosamine-beta-4-(phosphate-6-)mannose), a carbohydrate structure present in alpha-dystroglycan (DAG1). This constitutes the second step in the formation of the ribose 5-phosphate tandem repeat which links the phosphorylated O-mannosyl trisaccharide to the ligand binding moiety composed of repeats of 3-xylosyl-alpha-1,3-glucuronic acid-beta-1. In Homo sapiens (Human), this protein is Ribitol 5-phosphate transferase FKRP.